Here is a 75-residue protein sequence, read N- to C-terminus: uncharacterized protein (75 aa).

Residues Val49–Phe69 form a helical membrane-spanning segment.

It localises to the host membrane. This is an uncharacterized protein from Saccharolobus islandicus (Sulfolobus islandicus).